Consider the following 450-residue polypeptide: Phosphoglucosamine mutase (450 aa).

Serine 101 functions as the Phosphoserine intermediate in the catalytic mechanism. Mg(2+) contacts are provided by serine 101, aspartate 242, aspartate 244, and aspartate 246. Phosphoserine is present on serine 101.

Belongs to the phosphohexose mutase family. Mg(2+) serves as cofactor. Post-translationally, activated by phosphorylation.

It catalyses the reaction alpha-D-glucosamine 1-phosphate = D-glucosamine 6-phosphate. Functionally, catalyzes the conversion of glucosamine-6-phosphate to glucosamine-1-phosphate. The protein is Phosphoglucosamine mutase of Rhodopseudomonas palustris (strain ATCC BAA-98 / CGA009).